We begin with the raw amino-acid sequence, 237 residues long: 5'-methylthioadenosine/S-adenosylhomocysteine nucleosidase (237 aa).

Glutamate 12 (proton acceptor) is an active-site residue. Residues alanine 78, isoleucine 152, and 173 to 174 (ME) each bind substrate. The active-site Proton donor is the aspartate 197.

It belongs to the PNP/UDP phosphorylase family. MtnN subfamily. In terms of assembly, homodimer.

It carries out the reaction S-adenosyl-L-homocysteine + H2O = S-(5-deoxy-D-ribos-5-yl)-L-homocysteine + adenine. The enzyme catalyses S-methyl-5'-thioadenosine + H2O = 5-(methylsulfanyl)-D-ribose + adenine. It catalyses the reaction 5'-deoxyadenosine + H2O = 5-deoxy-D-ribose + adenine. The protein operates within amino-acid biosynthesis; L-methionine biosynthesis via salvage pathway; S-methyl-5-thio-alpha-D-ribose 1-phosphate from S-methyl-5'-thioadenosine (hydrolase route): step 1/2. In terms of biological role, catalyzes the irreversible cleavage of the glycosidic bond in both 5'-methylthioadenosine (MTA) and S-adenosylhomocysteine (SAH/AdoHcy) to adenine and the corresponding thioribose, 5'-methylthioribose and S-ribosylhomocysteine, respectively. Also cleaves 5'-deoxyadenosine, a toxic by-product of radical S-adenosylmethionine (SAM) enzymes, into 5-deoxyribose and adenine. Thus, is required for in vivo function of the radical SAM enzymes biotin synthase and lipoic acid synthase, that are inhibited by 5'-deoxyadenosine accumulation. The protein is 5'-methylthioadenosine/S-adenosylhomocysteine nucleosidase of Hamiltonella defensa subsp. Acyrthosiphon pisum (strain 5AT).